A 384-amino-acid polypeptide reads, in one-letter code: Lipid-A-disaccharide synthase (384 aa).

Belongs to the LpxB family.

The enzyme catalyses a lipid X + a UDP-2-N,3-O-bis[(3R)-3-hydroxyacyl]-alpha-D-glucosamine = a lipid A disaccharide + UDP + H(+). It participates in bacterial outer membrane biogenesis; LPS lipid A biosynthesis. Its function is as follows. Condensation of UDP-2,3-diacylglucosamine and 2,3-diacylglucosamine-1-phosphate to form lipid A disaccharide, a precursor of lipid A, a phosphorylated glycolipid that anchors the lipopolysaccharide to the outer membrane of the cell. The polypeptide is Lipid-A-disaccharide synthase (Cellvibrio japonicus (strain Ueda107) (Pseudomonas fluorescens subsp. cellulosa)).